A 180-amino-acid polypeptide reads, in one-letter code: MQLLLLTVGLALICGLQAQEGNHEEPQGGLEELSGRWHSVALASNKSDLIKPWGHFRVFIHSMSAKDGNLHGDILIPQDGQCEKVSLTAFKTATSNKFDLEYWGHNDLYLAEVDPKSYLILYMINQYNDDTSLVAHLMVRDLSRQQDFLPAFESVCEDIGLHKDQIVVLSDDDRCQGSRD.

The N-terminal stretch at 1–18 (MQLLLLTVGLALICGLQA) is a signal peptide. N45 carries N-linked (GlcNAc...) asparagine glycosylation. A disulfide bridge links C82 with C175.

Belongs to the calycin superfamily. Lipocalin family. As to expression, tongue epithelial tissue and parotid gland.

The protein resides in the secreted. This Canis lupus familiaris (Dog) protein is Minor allergen Can f 2.